A 1486-amino-acid polypeptide reads, in one-letter code: MIERGKFRSLTLINWNGFFARTFDLDELVTTLSGGNGAGKSTTMAAFVTALIPDLTLLHFRNTTEAGATSGSRDKGLHGKLKAGVCYSMLDTINSRHQRVVVGVRLQQVAGRDRKVDIKPFAIQGLPMSVQPTQLVTETLNERQARVLPLNELKDKLEAMEGVQFKQFNSITDYHSLMFDLGIIARRLRSASDRSKFYRLIEASLYGGISSAITRSLRDYLLPENSGVRKAFQDMEAALRENRMTLEAIRVTQSDRDLFKHLISEATNYVAADYMRHANERRVHLDKALEFRRELHTSRQQLAAEQYKHVDMARELAEHNGAEGDLEADYQAASDHLNLVQTALRQQEKIERYEADLDELQIRLEEQNEVVAEAIERQEENEARAEAAELEVDELKSQLADYQQALDVQQTRAIQYNQAIAALNRAKELCHLPDLTADSAAEWLETFQAKELEATEKMLSLEQKMSMAQTAHSQFEQAYQLVVAINGPLARNEAWDVARELLREGVDQRHLAEQVQPLRMRLSELEQRLREQQEAERLLADFCKRQGKNFDIDELEALHQELEARIASLSDSVSNAREERMALRQEQEQLQSRIQSLMQRAPVWLAAQNSLNQLSEQCGEEFTSSQDVTEYLQQLLEREREAIVERDEVGARKNAVDEEIERLSQPGGSEDQRLNALAERFGGVLLSEIYDDVSLEDAPYFSALYGPSRHAIVVPDLSQVTEHLDGLTDCPEDLYLIEGDPQSFDDSVFSVDELEKAVVVKIADRQWRYSRFPEVPLFGRAARESRIESLHAEREVLSERFATLSFDVQKTQRLHQAFSRFIGSHLAVVFESDPEAEIRQLNSRRVELERALSNHENDNQQQRIQFEQAKEGVTALNRILPRLNLLADDSLADRVDEIRERLDEAQEAARFVQQFGNQLAKLEPIVSVLQSDPEQFEQLKEDYAYSQQMQRDARQQAFALTEVVQRRAHFSYSDSAEMLSGNSDLNEKLRERLEQAEAERTRAREALRGHAAQLSQYNQVLASLKSSYDTKKELLNDLQRELQDIGVRADSGAEERARIRRDELHAQLSNNRSRRNQLEKALTFCEAEMDNLTRKLRKLERDYFEMREQVVTAKAGWCAVMRMVKDNGVERRLHRRELAYLSADDLRSMSDKALGALRLAVADNEHLRDVLRMSEDPKRPERKIQFFVAAYQHLRERIRQDIIRTDDPVEAIEQMEIELSRLTEELTSREQKLVISSRSVANIIRKTIQREQNRIRMLNQGLQNVSFGQVNSVRLNVNVRETHAMLLDVLSEQHEQHQDLFNSNRLTFSEALAKLYQRLNPQIDMGQRTPQTIGEELLDYRNYLEMEVEVNRGSDGWLRAESGALSTGEAIGTGMSILVMVVQSWEDESRRLRGKDISPCRLLFLDEAARLDARSIATLFELCERLQMQLIIAAPENISPEKGTTYKLVRKVFQNTEHVHVVGLRGFAPQLPETLPGTDEAPSQAS.

34–41 (GGNGAGKS) contacts ATP. Coiled coils occupy residues 326–418 (LEAD…QYNQ), 444–480 (LETF…QAYQ), and 509–603 (RHLA…RAPV). Residues 666–783 (PGGSEDQRLN…EVPLFGRAAR (118 aa)) form a flexible hinge region. 3 coiled-coil regions span residues 835–923 (EAEI…AKLE), 977–1115 (EMLS…TAKA), and 1209–1266 (VEAI…QNVS).

The protein belongs to the SMC family. MukB subfamily. Homodimerization via its hinge domain. Binds to DNA via its C-terminal region. Interacts, and probably forms a ternary complex, with MukE and MukF via its C-terminal region. The complex formation is stimulated by calcium or magnesium. Interacts with tubulin-related protein FtsZ.

Its subcellular location is the cytoplasm. It localises to the nucleoid. In terms of biological role, plays a central role in chromosome condensation, segregation and cell cycle progression. Functions as a homodimer, which is essential for chromosome partition. Involved in negative DNA supercoiling in vivo, and by this means organize and compact chromosomes. May achieve or facilitate chromosome segregation by condensation DNA from both sides of a centrally located replisome during cell division. The polypeptide is Chromosome partition protein MukB (Shigella boydii serotype 18 (strain CDC 3083-94 / BS512)).